The primary structure comprises 101 residues: Large ribosomal subunit protein bL25 (101 aa).

It belongs to the bacterial ribosomal protein bL25 family. Part of the 50S ribosomal subunit; part of the 5S rRNA/L5/L18/L25 subcomplex. Contacts the 5S rRNA. Binds to the 5S rRNA independently of L5 and L18.

This is one of the proteins that binds to the 5S RNA in the ribosome where it forms part of the central protuberance. The sequence is that of Large ribosomal subunit protein bL25 from Thermosynechococcus vestitus (strain NIES-2133 / IAM M-273 / BP-1).